A 365-amino-acid polypeptide reads, in one-letter code: G-protein coupled receptor 68 (365 aa).

Residues 1–12 (MGNITADNSSMS) are Extracellular-facing. 2 N-linked (GlcNAc...) asparagine glycosylation sites follow: N3 and N8. The chain crosses the membrane as a helical span at residues 13–49 (CTIDHTIHQTLAPVVYVTVLVVGFPANCLSLYFGYLQ). Intrachain disulfides connect C13–C258 and C94–C172. At 50 to 53 (IKAR) the chain is on the cytoplasmic side. A helical transmembrane segment spans residues 54 to 84 (NELGVYLCNLTVADLFYICSLPFWLQYVLQH). Over 85 to 89 (DNWSH) the chain is Extracellular. Residues 90–125 (GDLSCQVCGILLYENIYISVGFLCCISVDRYLAVAH) form a helical membrane-spanning segment. Residues 126 to 133 (PFRFHQFR) are Cytoplasmic-facing. The chain crosses the membrane as a helical span at residues 134–160 (TLKAAVGVSVVIWAKELLTSIYFLMHE). Over 161 to 176 (EVIEDENQHRVCFEHY) the chain is Extracellular. An extracellular loop 2 (ECL2) region spans residues 161-176 (EVIEDENQHRVCFEHY). Residues 177 to 214 (PIQAWQRAINYYRFLVGFLFPICLLLASYQGILRAVRR) form a helical membrane-spanning segment. At 215–218 (SHGT) the chain is on the cytoplasmic side. The chain crosses the membrane as a helical span at residues 219–254 (QKSRKDQIQRLVLSTVVIFLACFLPYHVLLLVRSVW). Residues 255 to 260 (EASCDF) are Extracellular-facing. The chain crosses the membrane as a helical span at residues 261–289 (AKGVFNAYHFSLLLTSFNCVADPVLYCFV). The Cytoplasmic segment spans residues 290-365 (SETTHRDLAR…SGGFPTGRLA (76 aa)). A disordered region spans residues 345 to 365 (HPAFQTPNSPGSGGFPTGRLA). The segment covering 355 to 365 (GSGGFPTGRLA) has biased composition (gly residues).

Belongs to the G-protein coupled receptor 1 family. As to expression, found at low level in a wide range of tissues, but significantly expressed in lung, kidney, bone and nervous system.

The protein resides in the cell membrane. Activated by a network of residues that connects an extracellular-facing cavity to Glu-149, a conserved charged residue buried in the transmembrane core of the receptor. Protonation likely drives conformational changes in extracellular loop 2 (ECL2), which stabilizes movement of transmembrane 3 (TM3) and a series of rearrangements that connect the extracellular-facing cavity to Glu-149, a residue only conserved in proton-sensing G-protein coupled receptors. Activated in an allosteric manner by divalent metal ions at the extracellular surface following the order: Cd(2+) &gt; Co(2+) &gt; Ni(2+) &gt; Zn(2+) &gt; Fe(2+) &gt; Ca(2+) &gt; Mg(2+). Activated by the benzodiazepine drug lorazepam, a non-selective GPR68 positive allosteric modulator. Activated by ogerin (ZINC67740571), a selective GPR68 positive allosteric modulator. Activated by small molecule MS48107, a selective positive allosteric modulator. Inhibited by small molecule ogremorphin, inducing ferroptosis in cancer cells. Its function is as follows. Proton-sensing G-protein coupled receptor activated by extracellular pH, which is required to monitor pH changes and generate adaptive reactions. The receptor is almost silent at pH 7.8 but fully activated at pH 6.8. Ligand binding causes a conformation change that triggers signaling via guanine nucleotide-binding proteins (G proteins) and modulates the activity of downstream effectors, such as phospholipase C. GPR68 is mainly coupled to G(q) G proteins and mediates production of diacylglycerol (DAG) and inositol 1,4,5-trisphosphate (IP3). Acts as a key mechanosensor of fluid shear stress and membrane stretch. Expressed in endothelial cells of small-diameter resistance arteries, where it mediates flow-induced dilation in response to shear stress. May represents an osteoblastic pH sensor regulating cell-mediated responses to acidosis in bone. Acts as a regulator of calcium-sensing receptor CASR in a seesaw manner: GPR68-mediated signaling inhibits CASR signaling in response to protons, while CASR inhibits GPR68 in presence of extracellular calcium. This is G-protein coupled receptor 68 from Homo sapiens (Human).